Here is a 505-residue protein sequence, read N- to C-terminus: UDP-N-acetylmuramoyl-L-alanyl-D-glutamate--2,6-diaminopimelate ligase (505 aa).

Ser-42 serves as a coordination point for UDP-N-acetyl-alpha-D-muramoyl-L-alanyl-D-glutamate. 126-132 (GTNGKTT) lines the ATP pocket. Residues 168–169 (TT), Ser-195, Gln-201, and Arg-203 contribute to the UDP-N-acetyl-alpha-D-muramoyl-L-alanyl-D-glutamate site. N6-carboxylysine is present on Lys-235. Residues Arg-399, 423–426 (DNPR), Gly-474, and Glu-478 contribute to the meso-2,6-diaminopimelate site. Positions 423-426 (DNPR) match the Meso-diaminopimelate recognition motif motif.

This sequence belongs to the MurCDEF family. MurE subfamily. It depends on Mg(2+) as a cofactor. Post-translationally, carboxylation is probably crucial for Mg(2+) binding and, consequently, for the gamma-phosphate positioning of ATP.

It is found in the cytoplasm. The enzyme catalyses UDP-N-acetyl-alpha-D-muramoyl-L-alanyl-D-glutamate + meso-2,6-diaminopimelate + ATP = UDP-N-acetyl-alpha-D-muramoyl-L-alanyl-gamma-D-glutamyl-meso-2,6-diaminopimelate + ADP + phosphate + H(+). The protein operates within cell wall biogenesis; peptidoglycan biosynthesis. Functionally, catalyzes the addition of meso-diaminopimelic acid to the nucleotide precursor UDP-N-acetylmuramoyl-L-alanyl-D-glutamate (UMAG) in the biosynthesis of bacterial cell-wall peptidoglycan. The sequence is that of UDP-N-acetylmuramoyl-L-alanyl-D-glutamate--2,6-diaminopimelate ligase from Synechocystis sp. (strain ATCC 27184 / PCC 6803 / Kazusa).